The following is a 470-amino-acid chain: MKFGHDFKRALENDMPPGWGEAAIQYKALKKCIKRFVFELSSLGLSAETISKLMAPTTVDPQQAITLSYSLGKEGHIVVPKIIINVNFDKLKTDKFAASMFKQLNASNMITTVRSNYASNVPSTPSDSTQQPPTNTLPSVSASSQSVETCETVDEDIDTQTMSSDMSEVQSMEISLNCDHEFFEKLTSELQSVEGLQREQRKILFNAIDILSHEISLIASPNSKKKYKSLYCWRKIFEIYMDSDIFISCKEADQSHERTPELAERHLKWFDDQVRLAKCLPSSSKHRDRILYAKFLELNESLLKVASFQQMNKLAVTKIMKKFDKRTSLTAQPLFFQVIESDPLLLVDNASKAICFSLSSKLFSIIPQLRDFECAICSNVAYKPVRLGCSHVFCLHCLIILQKQKVDFCPLCRAKEVMKADSRNIDHALMNFMKTYFPREIKEKFEENENDTFTPSSISVVSGQNNCVIM.

The region spanning 1 to 337 (MKFGHDFKRA…SLTAQPLFFQ (337 aa)) is the SPX domain. A disordered region spans residues 118–145 (ASNVPSTPSDSTQQPPTNTLPSVSASSQ). Positions 122–136 (PSTPSDSTQQPPTNT) are enriched in low complexity. Residues 374-413 (CAICSNVAYKPVRLGCSHVFCLHCLIILQKQKVDFCPLCR) form an RING-type zinc finger.

It is found in the cytoplasm. This is an uncharacterized protein from Schizosaccharomyces pombe (strain 972 / ATCC 24843) (Fission yeast).